Consider the following 645-residue polypeptide: 1,4-alpha-glucan branching enzyme GlgB (645 aa).

Catalysis depends on Asp-309, which acts as the Nucleophile. Glu-352 (proton donor) is an active-site residue. Positions 619–645 are disordered; that stretch reads VKTRKGSKKQDGSKTKVRSNVTSRGKR. Positions 636 to 645 are enriched in polar residues; that stretch reads RSNVTSRGKR.

It belongs to the glycosyl hydrolase 13 family. GlgB subfamily. In terms of assembly, monomer.

It carries out the reaction Transfers a segment of a (1-&gt;4)-alpha-D-glucan chain to a primary hydroxy group in a similar glucan chain.. The protein operates within glycan biosynthesis; glycogen biosynthesis. Catalyzes the formation of the alpha-1,6-glucosidic linkages in glycogen by scission of a 1,4-alpha-linked oligosaccharide from growing alpha-1,4-glucan chains and the subsequent attachment of the oligosaccharide to the alpha-1,6 position. The chain is 1,4-alpha-glucan branching enzyme GlgB from Bacillus cereus (strain AH187).